The chain runs to 333 residues: HTH-type transcriptional regulator pepR1 (333 aa).

An HTH lacI-type domain is found at 6 to 60 (VTIYDVAREAKVSMATVSRVVNGNNNVRKETRDRVMEVIKRLHYQPNAVAQGLAS). The H-T-H motif DNA-binding region spans 8-27 (IYDVAREAKVSMATVSRVVN).

Functionally, transcriptional regulator of the pepQ gene for prolidase. In Lactobacillus delbrueckii subsp. lactis, this protein is HTH-type transcriptional regulator pepR1 (pepR1).